The following is a 638-amino-acid chain: 1-deoxy-D-xylulose-5-phosphate synthase (638 aa).

Residues His79 and 120-122 (AHS) contribute to the thiamine diphosphate site. Mg(2+) is bound at residue Asp151. Thiamine diphosphate contacts are provided by residues 152 to 153 (GA), Asn180, Tyr289, and Glu371. Residue Asn180 participates in Mg(2+) binding.

The protein belongs to the transketolase family. DXPS subfamily. In terms of assembly, homodimer. The cofactor is Mg(2+). Thiamine diphosphate serves as cofactor.

The enzyme catalyses D-glyceraldehyde 3-phosphate + pyruvate + H(+) = 1-deoxy-D-xylulose 5-phosphate + CO2. The protein operates within metabolic intermediate biosynthesis; 1-deoxy-D-xylulose 5-phosphate biosynthesis; 1-deoxy-D-xylulose 5-phosphate from D-glyceraldehyde 3-phosphate and pyruvate: step 1/1. Catalyzes the acyloin condensation reaction between C atoms 2 and 3 of pyruvate and glyceraldehyde 3-phosphate to yield 1-deoxy-D-xylulose-5-phosphate (DXP). The chain is 1-deoxy-D-xylulose-5-phosphate synthase from Rhizobium johnstonii (strain DSM 114642 / LMG 32736 / 3841) (Rhizobium leguminosarum bv. viciae).